Here is a 136-residue protein sequence, read N- to C-terminus: Gilles de la Tourette syndrome chromosomal region candidate gene 1 protein (136 aa).

The helical transmembrane segment at 73–93 (AICMEVFLFLWFIAPIYACVC) threads the bilayer.

Its subcellular location is the membrane. This Homo sapiens (Human) protein is Gilles de la Tourette syndrome chromosomal region candidate gene 1 protein (GTSCR1).